Consider the following 232-residue polypeptide: Putative dimethylsulfoniopropionate lyase DddL (232 aa).

4 residues coordinate a divalent metal cation: histidine 154, glutamate 159, tyrosine 161, and histidine 190.

Belongs to the non-heme iron-dependent dioxygenase family. As to quaternary structure, homodimer. It depends on a divalent metal cation as a cofactor.

The catalysed reaction is S,S-dimethyl-beta-propiothetin = acrylate + dimethyl sulfide + H(+). Functionally, may cleave dimethylsulfoniopropionate (DMSP), releasing dimethyl sulfide (DMS). DMS is the principal form by which sulfur is transported from oceans to the atmosphere. The real activity of the protein is however subject to debate and it is unclear whether it constitutes a real dimethylsulfoniopropionate lyase in vivo. The chain is Putative dimethylsulfoniopropionate lyase DddL (dddL) from Cereibacter sphaeroides (strain ATCC 17023 / DSM 158 / JCM 6121 / CCUG 31486 / LMG 2827 / NBRC 12203 / NCIMB 8253 / ATH 2.4.1.) (Rhodobacter sphaeroides).